A 190-amino-acid chain; its full sequence is Endoribonuclease YbeY (190 aa).

The disordered stretch occupies residues 1–25; that stretch reads MSQPRPGHRPDCNGADPDSNFASMT. The Zn(2+) site is built by His-147, His-151, and His-157.

The protein belongs to the endoribonuclease YbeY family. It depends on Zn(2+) as a cofactor.

Its subcellular location is the cytoplasm. In terms of biological role, single strand-specific metallo-endoribonuclease involved in late-stage 70S ribosome quality control and in maturation of the 3' terminus of the 16S rRNA. The protein is Endoribonuclease YbeY of Rhodopseudomonas palustris (strain ATCC BAA-98 / CGA009).